Reading from the N-terminus, the 480-residue chain is UDP-N-acetylmuramoylalanine--D-glutamate ligase (480 aa).

120–126 (GTNGKTT) lines the ATP pocket.

The protein belongs to the MurCDEF family.

The protein resides in the cytoplasm. The catalysed reaction is UDP-N-acetyl-alpha-D-muramoyl-L-alanine + D-glutamate + ATP = UDP-N-acetyl-alpha-D-muramoyl-L-alanyl-D-glutamate + ADP + phosphate + H(+). It participates in cell wall biogenesis; peptidoglycan biosynthesis. Functionally, cell wall formation. Catalyzes the addition of glutamate to the nucleotide precursor UDP-N-acetylmuramoyl-L-alanine (UMA). This is UDP-N-acetylmuramoylalanine--D-glutamate ligase from Nocardia farcinica (strain IFM 10152).